A 263-amino-acid polypeptide reads, in one-letter code: Hydroxyethylthiazole kinase (263 aa).

Residue methionine 41 participates in substrate binding. ATP-binding residues include lysine 117 and serine 163. Substrate is bound at residue glycine 190.

It belongs to the Thz kinase family. Mg(2+) serves as cofactor.

The enzyme catalyses 5-(2-hydroxyethyl)-4-methylthiazole + ATP = 4-methyl-5-(2-phosphooxyethyl)-thiazole + ADP + H(+). It functions in the pathway cofactor biosynthesis; thiamine diphosphate biosynthesis; 4-methyl-5-(2-phosphoethyl)-thiazole from 5-(2-hydroxyethyl)-4-methylthiazole: step 1/1. Functionally, catalyzes the phosphorylation of the hydroxyl group of 4-methyl-5-beta-hydroxyethylthiazole (THZ). The chain is Hydroxyethylthiazole kinase from Thermoanaerobacter sp. (strain X514).